We begin with the raw amino-acid sequence, 421 residues long: Vasopressin V1b receptor (421 aa).

The Extracellular segment spans residues 1–35 (MDSEPSWTATPSPGGTLFVPNTTTPWLGRDEELAK). N-linked (GlcNAc...) asparagine glycosylation is present at asparagine 21. The chain crosses the membrane as a helical span at residues 36 to 59 (VEIGILATVLVLATGGNLAVLLIL). At 60 to 71 (GLQGHKRSRMHL) the chain is on the cytoplasmic side. Residues 72 to 93 (FVLHLALTDLGVALFQVLPQLL) form a helical membrane-spanning segment. The Extracellular portion of the chain corresponds to 94 to 108 (WDITYRFQGSDLLCR). A disulfide bridge connects residues cysteine 107 and cysteine 186. Residues 109–130 (AVKYLQVLSMFASTYMLLAMTL) traverse the membrane as a helical segment. Residues 131–151 (DRYLAVCHPLRSLQQPSQSTY) lie on the Cytoplasmic side of the membrane. A helical membrane pass occupies residues 152 to 173 (PLIAAPWLLAAILSLPQVFIFS). The Extracellular segment spans residues 174–202 (LREVIQGSGVLDCWADFYFSWGPRAYITW). Residues 203–223 (TTMAIFVLPVVVLTACYGLIC) form a helical membrane-spanning segment. Residues 224-280 (HEIYKNLKVKTQAGREERRGWPKSSSSAAAAATRGLPSRVSSISTISRAKIRTVKMT) are Cytoplasmic-facing. The chain crosses the membrane as a helical span at residues 281–300 (FVIVLAYIACWAPFFSVQMW). The Extracellular portion of the chain corresponds to 301 to 318 (SVWDENAPNEDSTNVAFT). Residues 319–338 (ISMLLGNLSSCCNPWIYMGF) form a helical membrane-spanning segment. Topologically, residues 339-421 (NSHLLPRSLS…GEATMETSIS (83 aa)) are cytoplasmic. Residues 399–421 (KPAGSLKDLEQVDGEATMETSIS) are disordered.

It belongs to the G-protein coupled receptor 1 family. Vasopressin/oxytocin receptor subfamily.

The protein resides in the cell membrane. Receptor for arginine vasopressin. The activity of this receptor is mediated by G proteins which activate a phosphatidyl-inositol-calcium second messenger system. The sequence is that of Vasopressin V1b receptor (Avpr1b) from Mus musculus (Mouse).